The following is a 1014-amino-acid chain: Probable LRR receptor-like serine/threonine-protein kinase At1g07650 (1014 aa).

The N-terminal stretch at 1–23 is a signal peptide; the sequence is MIYLHRIYFIIVLFTLIFHGRLG. The Extracellular segment spans residues 24-619; sequence FSDNNKLHEA…KPPVYYDTKD (596 aa). N-linked (GlcNAc...) asparagine glycans are attached at residues Asn-76, Asn-87, and Asn-101. LRR repeat units lie at residues 89-112, 113-137, 139-160, 161-184, 186-207, 208-234, 256-279, 280-304, 305-327, 329-352, and 354-376; these read SCHVIRIALKSQNLTGIVPPEFSK, LRHLKVLDLSRNSLTGSIPKEWASM, LEDLSFMGNRLSGPFPKVLTRL, TMLRNLSLEGNQFSGPIPPDIGQL, HLEKLHLPSNAFTGPLTEKLGL, LKNLTDMRISDNNFTGPIPDFISNWTR, LTSLTDLRISDLGGKPSSFPPLKN, LESIKTLILRKCKIIGPIPKYIGDL, KKLKTLDLSFNLLSGEIPSSFEN, KKADFIYLTGNKLTGGVPNYFVER, and KNVDVSFNNFTDESSIPSHDCNR. N-linked (GlcNAc...) asparagine glycosylation is present at Asn-165. Residues Asn-210, Asn-220, and Asn-231 are each glycosylated (N-linked (GlcNAc...) asparagine). Asn-362, Asn-389, Asn-474, Asn-481, and Asn-511 each carry an N-linked (GlcNAc...) asparagine glycan. An LRR 12 repeat occupies 516–539; it reads LHFAEIIFTDDNTLYSLGKRLFDI. Asn-570 is a glycosylation site (N-linked (GlcNAc...) asparagine). Residues 620 to 640 traverse the membrane as a helical segment; that stretch reads IILKVGVPVAAATLLLFIIVG. Residues 641–1014 are Cytoplasmic-facing; it reads VFWKKRRDKN…DAEEKTGLLD (374 aa). A Phosphothreonine modification is found at Thr-667. One can recognise a Protein kinase domain in the interval 678 to 960; the sequence is FDVTRKIGEG…EGKTAMQELL (283 aa). Residues 684–692 and Lys-706 contribute to the ATP site; that span reads IGEGGFGSV. At Tyr-751 the chain carries Phosphotyrosine. Asp-805 functions as the Proton acceptor in the catalytic mechanism. Phosphoserine occurs at positions 809 and 838. Phosphothreonine is present on residues Thr-839 and Thr-844. Tyr-852 carries the post-translational modification Phosphotyrosine. Ser-989 is subject to Phosphoserine. Over residues 989–1002 the composition is skewed to polar residues; the sequence is SFSTSGPRTASANS. The disordered stretch occupies residues 989-1014; it reads SFSTSGPRTASANSLVDAEEKTGLLD.

The protein belongs to the protein kinase superfamily. Ser/Thr protein kinase family.

The protein localises to the membrane. The catalysed reaction is L-seryl-[protein] + ATP = O-phospho-L-seryl-[protein] + ADP + H(+). It catalyses the reaction L-threonyl-[protein] + ATP = O-phospho-L-threonyl-[protein] + ADP + H(+). This is Probable LRR receptor-like serine/threonine-protein kinase At1g07650 from Arabidopsis thaliana (Mouse-ear cress).